We begin with the raw amino-acid sequence, 280 residues long: uncharacterized protein (280 aa).

An N-terminal signal peptide occupies residues 1–21 (MRPVIKVGLSTASVYPLRAEA).

This sequence to M.tuberculosis Rv0498 and S.coelicolor SCO3347.

This is an uncharacterized protein from Mycobacterium leprae (strain TN).